The following is a 316-amino-acid chain: HTH-type transcriptional regulator PecT (316 aa).

Residues Leu11–Thr68 form the HTH lysR-type domain. Residues Phe28–Gln47 constitute a DNA-binding region (H-T-H motif). The interval Leu293–Thr316 is disordered. A compositionally biased stretch (basic and acidic residues) spans Ser301 to Thr316.

The protein belongs to the LysR transcriptional regulatory family.

In terms of biological role, regulates pectinase gene expression. The sequence is that of HTH-type transcriptional regulator PecT (pecT) from Dickeya dadantii (strain 3937) (Erwinia chrysanthemi (strain 3937)).